Reading from the N-terminus, the 96-residue chain is RxLR effector protein PITG_11507 (96 aa).

A signal peptide spans Met-1 to Ala-19. Positions Ser-27–Asp-59 are disordered. The short motif at Arg-44 to Asp-59 is the RxLR-dEER element. Residues Leu-46–Thr-55 show a composition bias toward basic and acidic residues.

The protein belongs to the RxLR effector family.

Its subcellular location is the secreted. The protein localises to the host nucleus. It localises to the host cytoplasm. Functionally, effector that enhances P.infestans colonization of Nicotiana benthamiana leaves. This Phytophthora infestans (strain T30-4) (Potato late blight agent) protein is RxLR effector protein PITG_11507.